We begin with the raw amino-acid sequence, 156 residues long: Small ribosomal subunit protein uS15 (156 aa).

The tract at residues 1–67 (MARMHTRRRG…GVQGTPIPDV (67 aa)) is disordered. Residues 10–19 (GSSDSDKPAA) are compositionally biased toward basic and acidic residues. Residues 21–32 (EPPEWSDVDEDA) show a composition bias toward acidic residues.

Belongs to the universal ribosomal protein uS15 family. Part of the 30S ribosomal subunit.

This Haloarcula marismortui (strain ATCC 43049 / DSM 3752 / JCM 8966 / VKM B-1809) (Halobacterium marismortui) protein is Small ribosomal subunit protein uS15.